We begin with the raw amino-acid sequence, 133 residues long: MVMLDTLANAMAAIKNAEMRGKGEAIIMPSSKLIANVLRILEKEGYIGGFEYIDDGRWGKFRVKLLGRINDIGVVKPRTPVSYRELAKMPEHLRKYLASRDVGLLILSTPQGVMTHREALKRKIGGIVIAYVY.

Belongs to the universal ribosomal protein uS8 family. Part of the 30S ribosomal subunit.

Functionally, one of the primary rRNA binding proteins, it binds directly to 16S rRNA central domain where it helps coordinate assembly of the platform of the 30S subunit. The sequence is that of Small ribosomal subunit protein uS8 from Aeropyrum pernix (strain ATCC 700893 / DSM 11879 / JCM 9820 / NBRC 100138 / K1).